The following is a 597-amino-acid chain: Probable translation initiation factor IF-2 (597 aa).

A tr-type G domain is found at 4-221 (IRQPIIAVLG…LISGLAQKYL (218 aa)). The segment at 13 to 20 (GHVDHGKT) is G1. 13–20 (GHVDHGKT) provides a ligand contact to GTP. The tract at residues 38–42 (GITQH) is G2. Residues 77-80 (DTPG) are G3. Residues 77-81 (DTPGH) and 131-134 (NKID) each bind GTP. The tract at residues 131–134 (NKID) is G4. Positions 199–201 (SAK) are G5.

It belongs to the TRAFAC class translation factor GTPase superfamily. Classic translation factor GTPase family. IF-2 subfamily.

Its function is as follows. Function in general translation initiation by promoting the binding of the formylmethionine-tRNA to ribosomes. Seems to function along with eIF-2. The chain is Probable translation initiation factor IF-2 from Thermococcus sibiricus (strain DSM 12597 / MM 739).